Reading from the N-terminus, the 566-residue chain is Putative ABC transporter ATP-binding protein BA_2641/GBAA_2641/BAS2461 (566 aa).

ABC transporter domains are found at residues 5–246 (ISFE…GLRE) and 300–533 (LKVE…ANLK). ATP contacts are provided by residues 39–46 (GRSGSGKS) and 333–340 (GHNGAGKS).

It belongs to the ABC transporter superfamily.

It is found in the cell membrane. In terms of biological role, probably part of an ABC transporter complex. Responsible for energy coupling to the transport system. The protein is Putative ABC transporter ATP-binding protein BA_2641/GBAA_2641/BAS2461 of Bacillus anthracis.